The primary structure comprises 243 residues: Proteasome subunit beta (243 aa).

Residues 1–40 (MRTPMNNDISGRPDSLNGDRSDVFSPELGEFPNADDRAND) are disordered. Residues 1–49 (MRTPMNNDISGRPDSLNGDRSDVFSPELGEFPNADDRANDIGDMETKTG) constitute a propeptide, removed in mature form; by autocatalysis. The Nucleophile role is filled by threonine 50.

It belongs to the peptidase T1B family. In terms of assembly, the 20S proteasome core is composed of 14 alpha and 14 beta subunits that assemble into four stacked heptameric rings, resulting in a barrel-shaped structure. The two inner rings, each composed of seven catalytic beta subunits, are sandwiched by two outer rings, each composed of seven alpha subunits. The catalytic chamber with the active sites is on the inside of the barrel. Has a gated structure, the ends of the cylinder being occluded by the N-termini of the alpha-subunits. Is capped at one or both ends by the proteasome regulatory ATPase, PAN.

The protein localises to the cytoplasm. It carries out the reaction Cleavage of peptide bonds with very broad specificity.. With respect to regulation, the formation of the proteasomal ATPase PAN-20S proteasome complex, via the docking of the C-termini of PAN into the intersubunit pockets in the alpha-rings, triggers opening of the gate for substrate entry. Interconversion between the open-gate and close-gate conformations leads to a dynamic regulation of the 20S proteasome proteolysis activity. Functionally, component of the proteasome core, a large protease complex with broad specificity involved in protein degradation. The sequence is that of Proteasome subunit beta from Haloquadratum walsbyi (strain DSM 16790 / HBSQ001).